The following is a 245-amino-acid chain: Uridylate kinase (245 aa).

15–18 (KLSG) provides a ligand contact to ATP. The interval 23–28 (GEEGFG) is involved in allosteric activation by GTP. G57 contributes to the UMP binding site. Residues G58 and R62 each coordinate ATP. Residues D77 and 138 to 145 (TGNPFCTT) each bind UMP. The ATP site is built by T165, Y171, and D174.

Belongs to the UMP kinase family. Homohexamer.

The protein localises to the cytoplasm. It carries out the reaction UMP + ATP = UDP + ADP. Its pathway is pyrimidine metabolism; CTP biosynthesis via de novo pathway; UDP from UMP (UMPK route): step 1/1. With respect to regulation, allosterically activated by GTP. Inhibited by UTP. Its function is as follows. Catalyzes the reversible phosphorylation of UMP to UDP. The chain is Uridylate kinase from Shewanella putrefaciens (strain CN-32 / ATCC BAA-453).